Here is a 367-residue protein sequence, read N- to C-terminus: Glutamate 5-kinase (367 aa).

K10 lines the ATP pocket. Positions 50, 137, and 149 each coordinate substrate. ATP contacts are provided by residues T169–D170 and T211–K217. Positions A275 to E353 constitute a PUA domain.

This sequence belongs to the glutamate 5-kinase family.

Its subcellular location is the cytoplasm. It carries out the reaction L-glutamate + ATP = L-glutamyl 5-phosphate + ADP. The protein operates within amino-acid biosynthesis; L-proline biosynthesis; L-glutamate 5-semialdehyde from L-glutamate: step 1/2. In terms of biological role, catalyzes the transfer of a phosphate group to glutamate to form L-glutamate 5-phosphate. This is Glutamate 5-kinase from Erwinia tasmaniensis (strain DSM 17950 / CFBP 7177 / CIP 109463 / NCPPB 4357 / Et1/99).